Reading from the N-terminus, the 349-residue chain is Probable tRNA pseudouridine synthase B (349 aa).

The active-site Nucleophile is the aspartate 41. In terms of domain architecture, PUA spans 207 to 279 (YPKVIVKETA…KVIDIDNVLI (73 aa)). Residues 300–309 (IPVQKPERKL) are compositionally biased toward basic and acidic residues. The segment at 300–349 (IPVQKPERKLHGNLQGSQEWKDTGNRGNPKRGGTGSKGFSSGFRKRKAKR) is disordered.

It belongs to the pseudouridine synthase TruB family. Type 2 subfamily.

The enzyme catalyses uridine(55) in tRNA = pseudouridine(55) in tRNA. In terms of biological role, could be responsible for synthesis of pseudouridine from uracil-55 in the psi GC loop of transfer RNAs. This is Probable tRNA pseudouridine synthase B from Picrophilus torridus (strain ATCC 700027 / DSM 9790 / JCM 10055 / NBRC 100828 / KAW 2/3).